The sequence spans 159 residues: NADH-quinone oxidoreductase subunit B 2 (159 aa).

Residues Cys37, Cys38, Cys102, and Cys132 each coordinate [4Fe-4S] cluster.

The protein belongs to the complex I 20 kDa subunit family. As to quaternary structure, NDH-1 is composed of 14 different subunits. Subunits NuoB, C, D, E, F, and G constitute the peripheral sector of the complex. [4Fe-4S] cluster serves as cofactor.

Its subcellular location is the cell inner membrane. It carries out the reaction a quinone + NADH + 5 H(+)(in) = a quinol + NAD(+) + 4 H(+)(out). In terms of biological role, NDH-1 shuttles electrons from NADH, via FMN and iron-sulfur (Fe-S) centers, to quinones in the respiratory chain. Couples the redox reaction to proton translocation (for every two electrons transferred, four hydrogen ions are translocated across the cytoplasmic membrane), and thus conserves the redox energy in a proton gradient. The sequence is that of NADH-quinone oxidoreductase subunit B 2 from Azoarcus sp. (strain BH72).